A 306-amino-acid polypeptide reads, in one-letter code: Ornithine carbamoyltransferase (306 aa).

Carbamoyl phosphate is bound by residues 51–54 (STRT), Gln-78, Arg-102, and 129–132 (HPCQ). Residues Asn-160, Asp-223, and 227-228 (SM) each bind L-ornithine. Residues 263-264 (CL) and Arg-291 each bind carbamoyl phosphate.

Belongs to the aspartate/ornithine carbamoyltransferase superfamily. OTCase family.

The protein resides in the cytoplasm. The enzyme catalyses carbamoyl phosphate + L-ornithine = L-citrulline + phosphate + H(+). It participates in amino-acid biosynthesis; L-arginine biosynthesis; L-arginine from L-ornithine and carbamoyl phosphate: step 1/3. Its function is as follows. Reversibly catalyzes the transfer of the carbamoyl group from carbamoyl phosphate (CP) to the N(epsilon) atom of ornithine (ORN) to produce L-citrulline. In Nostoc sp. (strain PCC 7120 / SAG 25.82 / UTEX 2576), this protein is Ornithine carbamoyltransferase.